Here is a 399-residue protein sequence, read N- to C-terminus: Elongation factor Tu (399 aa).

The region spanning 10-209 (KPHVNIGTIG…EVDAYIPTPE (200 aa)) is the tr-type G domain. The tract at residues 19–26 (GHVDHGKT) is G1. Residue 19–26 (GHVDHGKT) participates in GTP binding. Position 26 (threonine 26) interacts with Mg(2+). Residues 60 to 64 (GITIA) are G2. The G3 stretch occupies residues 81 to 84 (DCPG). GTP contacts are provided by residues 81–85 (DCPGH) and 136–139 (NKQD). A G4 region spans residues 136–139 (NKQD). The tract at residues 174 to 176 (SAL) is G5.

It belongs to the TRAFAC class translation factor GTPase superfamily. Classic translation factor GTPase family. EF-Tu/EF-1A subfamily. In terms of assembly, monomer.

Its subcellular location is the cytoplasm. It carries out the reaction GTP + H2O = GDP + phosphate + H(+). GTP hydrolase that promotes the GTP-dependent binding of aminoacyl-tRNA to the A-site of ribosomes during protein biosynthesis. This Helicobacter pylori (strain Shi470) protein is Elongation factor Tu.